Consider the following 2767-residue polypeptide: Serine/threonine-protein kinase ATM (2767 aa).

An FAT domain is found at 1713–2317 (NVVMASNHCQ…FYQLYPLVFA (605 aa)). The region spanning 2419-2734 (WTNETTQCGG…KLDGREAGTM (316 aa)) is the PI3K/PI4K catalytic domain. Residues 2425–2431 (QCGGLNA) form a G-loop region. The interval 2601-2609 (GLGDRHTQN) is catalytic loop. The segment at 2621–2645 (HIDFGIAFEQGKIQTTPETVPFRLT) is activation loop. The FATC domain maps to 2735 to 2767 (GDSNVEAQVERLINEATLPSNLCMLFPGWDPHL).

The protein belongs to the PI3/PI4-kinase family. ATM subfamily.

It localises to the nucleus. The protein resides in the chromosome. It is found in the telomere. The enzyme catalyses L-seryl-[protein] + ATP = O-phospho-L-seryl-[protein] + ADP + H(+). It carries out the reaction L-threonyl-[protein] + ATP = O-phospho-L-threonyl-[protein] + ADP + H(+). In terms of biological role, serine/threonine-protein kinase which recognizes the substrate consensus sequence [ST]-Q. Required to suppress spontaneous apoptosis of proliferating cells during development, and for their proper differentiation. Required for female fertility. Protects telomeres from fusion, maybe by recruiting or maintaining chromatin-modifying complexes such as Su(var)205/HP1. May activate checkpoint signaling in response to DNA double-stranded breaks induced by low-dose ionizing radiation. May phosphorylate histone H2AV. This Drosophila melanogaster (Fruit fly) protein is Serine/threonine-protein kinase ATM (tefu).